The following is a 273-amino-acid chain: 2,3,4,5-tetrahydropyridine-2,6-dicarboxylate N-succinyltransferase (273 aa).

Residues Arg104 and Asp141 each contribute to the substrate site.

The protein belongs to the transferase hexapeptide repeat family. As to quaternary structure, homotrimer.

The protein localises to the cytoplasm. The enzyme catalyses (S)-2,3,4,5-tetrahydrodipicolinate + succinyl-CoA + H2O = (S)-2-succinylamino-6-oxoheptanedioate + CoA. It participates in amino-acid biosynthesis; L-lysine biosynthesis via DAP pathway; LL-2,6-diaminopimelate from (S)-tetrahydrodipicolinate (succinylase route): step 1/3. The polypeptide is 2,3,4,5-tetrahydropyridine-2,6-dicarboxylate N-succinyltransferase (Blochmanniella pennsylvanica (strain BPEN)).